A 421-amino-acid chain; its full sequence is Trimethyllysine dioxygenase, mitochondrial (421 aa).

The transit peptide at 1 to 15 (MWCHRLSHLQSRLQD) directs the protein to the mitochondrion. Lys236 is modified (N6-acetyllysine). The Fe cation site is built by His242, Asp244, and His389.

The protein belongs to the gamma-BBH/TMLD family. Homodimer. The cofactor is Fe(2+). L-ascorbate serves as cofactor.

Its subcellular location is the mitochondrion matrix. It carries out the reaction N(6),N(6),N(6)-trimethyl-L-lysine + 2-oxoglutarate + O2 = (3S)-3-hydroxy-N(6),N(6),N(6)-trimethyl-L-lysine + succinate + CO2. It participates in amine and polyamine biosynthesis; carnitine biosynthesis. Functionally, converts trimethyllysine (TML) into hydroxytrimethyllysine (HTML). This is Trimethyllysine dioxygenase, mitochondrial (TMLHE) from Bos taurus (Bovine).